Reading from the N-terminus, the 364-residue chain is UDP-N-acetylglucosamine--N-acetylmuramyl-(pentapeptide) pyrophosphoryl-undecaprenol N-acetylglucosamine transferase 1 (364 aa).

UDP-N-acetyl-alpha-D-glucosamine contacts are provided by residues 10 to 12 (TGG), Asn124, Ser195, Ile250, and Gln295.

Belongs to the glycosyltransferase 28 family. MurG subfamily.

The protein localises to the cell membrane. It catalyses the reaction di-trans,octa-cis-undecaprenyl diphospho-N-acetyl-alpha-D-muramoyl-L-alanyl-D-glutamyl-meso-2,6-diaminopimeloyl-D-alanyl-D-alanine + UDP-N-acetyl-alpha-D-glucosamine = di-trans,octa-cis-undecaprenyl diphospho-[N-acetyl-alpha-D-glucosaminyl-(1-&gt;4)]-N-acetyl-alpha-D-muramoyl-L-alanyl-D-glutamyl-meso-2,6-diaminopimeloyl-D-alanyl-D-alanine + UDP + H(+). It functions in the pathway cell wall biogenesis; peptidoglycan biosynthesis. Cell wall formation. Catalyzes the transfer of a GlcNAc subunit on undecaprenyl-pyrophosphoryl-MurNAc-pentapeptide (lipid intermediate I) to form undecaprenyl-pyrophosphoryl-MurNAc-(pentapeptide)GlcNAc (lipid intermediate II). This Bacillus thuringiensis subsp. konkukian (strain 97-27) protein is UDP-N-acetylglucosamine--N-acetylmuramyl-(pentapeptide) pyrophosphoryl-undecaprenol N-acetylglucosamine transferase 1.